The sequence spans 424 residues: Translation initiation factor 2 subunit gamma (424 aa).

One can recognise a tr-type G domain in the interval 23–220 (LPEVNIGLVG…AIEETIPTPE (198 aa)). A G1 region spans residues 32–39 (GHVDHGKT). Residues Asp35, Thr39, Gly60, and Ser62 each contribute to the Mg(2+) site. 35-40 (DHGKTT) is a binding site for GTP. Residues 60-64 (GISIK) form a G2 region. The tract at residues 107-110 (DSPG) is G3. Residues 163 to 166 (NKID) and 198 to 200 (SAQ) contribute to the GTP site. A G4 region spans residues 163 to 166 (NKID). A G5 region spans residues 198 to 200 (SAQ).

It belongs to the TRAFAC class translation factor GTPase superfamily. Classic translation factor GTPase family. EIF2G subfamily. As to quaternary structure, heterotrimer composed of an alpha, a beta and a gamma chain. Mg(2+) serves as cofactor.

The enzyme catalyses GTP + H2O = GDP + phosphate + H(+). Functionally, eIF-2 functions in the early steps of protein synthesis by forming a ternary complex with GTP and initiator tRNA. This is Translation initiation factor 2 subunit gamma from Archaeoglobus fulgidus (strain ATCC 49558 / DSM 4304 / JCM 9628 / NBRC 100126 / VC-16).